We begin with the raw amino-acid sequence, 172 residues long: Protein-export protein SecB (172 aa).

This sequence belongs to the SecB family. In terms of assembly, homotetramer, a dimer of dimers. One homotetramer interacts with 1 SecA dimer.

The protein resides in the cytoplasm. In terms of biological role, one of the proteins required for the normal export of preproteins out of the cell cytoplasm. It is a molecular chaperone that binds to a subset of precursor proteins, maintaining them in a translocation-competent state. It also specifically binds to its receptor SecA. The polypeptide is Protein-export protein SecB (Dinoroseobacter shibae (strain DSM 16493 / NCIMB 14021 / DFL 12)).